The sequence spans 373 residues: Spore coat polysaccharide biosynthesis protein SpsE (373 aa).

Residues 305–367 (GIFTTAPIQK…GIVWDDILLK (63 aa)) enclose the AFP-like domain.

Its pathway is spore coat biogenesis; spore coat polysaccharide biosynthesis. In Bacillus subtilis (strain 168), this protein is Spore coat polysaccharide biosynthesis protein SpsE (spsE).